The sequence spans 184 residues: Probable archaeosortase E (184 aa).

A run of 4 helical transmembrane segments spans residues 27–47 (ILFLIKFYIIFLVVFFILSYF), 86–106 (VVEECTGSFLIAGLLALIIVY), 114–134 (IIGIFFVLLAFFVNIFRIVLI), and 151–171 (IAGYGVILTLVPVLVIGYLKI). The active-site Acyl-thioester intermediate is C90. The active-site Proton donor is the R130.

Belongs to the exosortase/archaeosortase family. Archaeosortase E subfamily.

It is found in the cell membrane. Functionally, transpeptidase that recognizes and modifies its substrate by proteolytic cleavage of a sorting signal. Following cleavage, a covalent intermediate is formed via a thioester bond between the archaeosortase and its substrate, which is then transferred and covalently attached to the cell membrane. In Methanocaldococcus jannaschii (strain ATCC 43067 / DSM 2661 / JAL-1 / JCM 10045 / NBRC 100440) (Methanococcus jannaschii), this protein is Probable archaeosortase E.